A 392-amino-acid polypeptide reads, in one-letter code: Phosphoglycerate kinase (392 aa).

Residues 19 to 21, Arg34, 57 to 60, Arg116, and Arg149 contribute to the substrate site; these read DYN and HLGR. Residues Lys199, Glu321, and 347-350 each bind ATP; that span reads GGDS.

This sequence belongs to the phosphoglycerate kinase family. As to quaternary structure, monomer.

It localises to the cytoplasm. The catalysed reaction is (2R)-3-phosphoglycerate + ATP = (2R)-3-phospho-glyceroyl phosphate + ADP. The protein operates within carbohydrate degradation; glycolysis; pyruvate from D-glyceraldehyde 3-phosphate: step 2/5. This chain is Phosphoglycerate kinase, found in Thermomicrobium roseum (strain ATCC 27502 / DSM 5159 / P-2).